Reading from the N-terminus, the 1088-residue chain is RNA-directed RNA polymerase (1088 aa).

Residues 501-687 enclose the RdRp catalytic domain; that stretch reads LSYGDVTRFL…AKRYIAGGKI (187 aa).

It belongs to the reoviridae RNA-directed RNA polymerase family. As to quaternary structure, interacts with VP3 (Potential). Interacts with VP2; this interaction activates VP1. Interacts with NSP5; this interaction is probably necessary for the formation of functional virus factories. Interacts with NSP2; this interaction is weak. Mg(2+) is required as a cofactor.

The protein resides in the virion. The catalysed reaction is RNA(n) + a ribonucleoside 5'-triphosphate = RNA(n+1) + diphosphate. RNA-directed RNA polymerase that is involved in both transcription and genome replication. Together with VP3 capping enzyme, forms an enzyme complex positioned near the channels situated at each of the five-fold vertices of the core. Following infection, the outermost layer of the virus is lost, leaving a double-layered particle (DLP) made up of the core and VP6 shell. VP1 then catalyzes the transcription of fully conservative plus-strand genomic RNAs that are extruded through the DLP's channels into the cytoplasm where they function as mRNAs for translation of viral proteins. One copy of each of the viral (+)RNAs is also recruited during core assembly, together with newly synthesized polymerase complexes and VP2. The polymerase of these novo-formed particles catalyzes the synthesis of complementary minus-strands leading to dsRNA formation. To do so, the polymerase specifically recognizes and binds 4 bases 5'-UGUG-3' in the conserved 3'-sequence of plus-strand RNA templates. VP2 presumably activates the autoinhibited VP1-RNA complex to coordinate packaging and genome replication. Once dsRNA synthesis is complete, the polymerase switches to the transcriptional mode, thus providing secondary transcription. The polypeptide is RNA-directed RNA polymerase (Bos taurus (Bovine)).